The sequence spans 47 residues: uncharacterized protein (47 aa).

The tract at residues 19-47 (EKVLKNQNPDRLSHMTDKNAQPKSKEKEE) is disordered.

This is an uncharacterized protein from Bacillus subtilis (strain 168).